The chain runs to 98 residues: VQ motif-containing protein 1 (98 aa).

Residues 27-36 carry the VQ motif; that stretch reads FKTIVQELTG.

Interacts with WRKY33.

The protein resides in the nucleus. Its function is as follows. May modulate WRKY transcription factor activities. The protein is VQ motif-containing protein 1 of Arabidopsis thaliana (Mouse-ear cress).